Here is a 684-residue protein sequence, read N- to C-terminus: Threonine--tRNA ligase (684 aa).

Residues 1–66 enclose the TGS domain; the sequence is MTVPATDSWP…DTDAEVVPVA (66 aa). Residues 261-567 are catalytic; the sequence is DHRKLGSELD…LTEHYAGAFP (307 aa). Positions 366, 417, and 544 each coordinate Zn(2+).

This sequence belongs to the class-II aminoacyl-tRNA synthetase family. Homodimer. Zn(2+) serves as cofactor.

The protein resides in the cytoplasm. The enzyme catalyses tRNA(Thr) + L-threonine + ATP = L-threonyl-tRNA(Thr) + AMP + diphosphate + H(+). Functionally, catalyzes the attachment of threonine to tRNA(Thr) in a two-step reaction: L-threonine is first activated by ATP to form Thr-AMP and then transferred to the acceptor end of tRNA(Thr). Also edits incorrectly charged L-seryl-tRNA(Thr). This is Threonine--tRNA ligase from Mycobacterium avium (strain 104).